A 225-amino-acid polypeptide reads, in one-letter code: Uracil-DNA glycosylase (225 aa).

Aspartate 65 serves as the catalytic Proton acceptor.

This sequence belongs to the uracil-DNA glycosylase (UDG) superfamily. UNG family.

The protein resides in the cytoplasm. It carries out the reaction Hydrolyzes single-stranded DNA or mismatched double-stranded DNA and polynucleotides, releasing free uracil.. In terms of biological role, excises uracil residues from the DNA which can arise as a result of misincorporation of dUMP residues by DNA polymerase or due to deamination of cytosine. The chain is Uracil-DNA glycosylase from Bacillus cereus (strain ZK / E33L).